We begin with the raw amino-acid sequence, 997 residues long: Pro-apoptotic serine protease NMA111 (997 aa).

The segment at 1 to 43 is disordered; sequence MTISLSNIKKRDHSKISDGTSGESSLVKRKQLESATGDQEEEY. The serine protease stretch occupies residues 83 to 273; it reads VVSIHFSQVA…LPLDRILRAL (191 aa). Active-site charge relay system residues include His121, Asp152, and Ser235. 2 PDZ domains span residues 300–378 and 779–854; these read RRLG…QRGG and EEWI…VRDG.

It belongs to the peptidase S1C family. Interacts with BIR1.

It localises to the nucleus. Nuclear serine protease which mediates apoptosis through proteolysis of the apoptotic inhibitor BIR1. The chain is Pro-apoptotic serine protease NMA111 (NMA111) from Saccharomyces cerevisiae (strain YJM789) (Baker's yeast).